We begin with the raw amino-acid sequence, 927 residues long: Isoleucine--tRNA ligase (927 aa).

The 'HIGH' region signature appears at 57–67; it reads PFANGNIHMGH. Glu553 contacts L-isoleucyl-5'-AMP. The 'KMSKS' region motif lies at 594–598; the sequence is KMSKS. Lys597 is a binding site for ATP. Residues Cys886, Cys889, Cys906, and Cys909 each contribute to the Zn(2+) site.

This sequence belongs to the class-I aminoacyl-tRNA synthetase family. IleS type 1 subfamily. Monomer. The cofactor is Zn(2+).

The protein localises to the cytoplasm. It catalyses the reaction tRNA(Ile) + L-isoleucine + ATP = L-isoleucyl-tRNA(Ile) + AMP + diphosphate. Functionally, catalyzes the attachment of isoleucine to tRNA(Ile). As IleRS can inadvertently accommodate and process structurally similar amino acids such as valine, to avoid such errors it has two additional distinct tRNA(Ile)-dependent editing activities. One activity is designated as 'pretransfer' editing and involves the hydrolysis of activated Val-AMP. The other activity is designated 'posttransfer' editing and involves deacylation of mischarged Val-tRNA(Ile). The chain is Isoleucine--tRNA ligase from Lactobacillus acidophilus (strain ATCC 700396 / NCK56 / N2 / NCFM).